Here is a 158-residue protein sequence, read N- to C-terminus: Eukaryotic translation initiation factor 5A-3 (158 aa).

Basic and acidic residues predominate over residues 1-10; that stretch reads MSDDEHHFES. The tract at residues 1–23 is disordered; that stretch reads MSDDEHHFESSDAGASKTYPQQA. Serine 2 carries the phosphoserine modification. Position 51 is a hypusine (lysine 51).

It belongs to the eIF-5A family. Post-translationally, lys-52 undergoes hypusination, a unique post-translational modification that consists in the addition of a butylamino group from spermidine to lysine side chain, leading to the formation of the unusual amino acid hypusine. eIF-5As are the only known proteins to undergo this modification, which is essential for their function. Expressed in the vascular tissues of roots, stems and leaves. Localized in phloem companion cells rather than sieve-tube members. Not expressed in xylem or procambium. Detected in root tips and in the chalazal tissue of fertilized ovules.

Its function is as follows. Translation factor that promotes translation elongation and termination, particularly upon ribosome stalling at specific amino acid sequence contexts. Binds between the exit (E) and peptidyl (P) site of the ribosome and promotes rescue of stalled ribosome: specifically required for efficient translation of polyproline-containing peptides as well as other motifs that stall the ribosome. Acts as a ribosome quality control (RQC) cofactor by joining the RQC complex to facilitate peptidyl transfer during CAT tailing step. Involved in supporting growth and plays a regulatory role in the response to sub-lethal osmotic and nutrient stress. The chain is Eukaryotic translation initiation factor 5A-3 (ELF5A-3) from Arabidopsis thaliana (Mouse-ear cress).